We begin with the raw amino-acid sequence, 140 residues long: Cytochrome c oxidase subunit 6, mitochondrial (140 aa).

Belongs to the cytochrome c oxidase subunit 5A family. In terms of assembly, component of the cytochrome c oxidase (complex IV, CIV), a multisubunit enzyme composed of a catalytic core of 3 subunits and several supernumerary subunits. The complex exists as a monomer or a dimer and forms supercomplexes (SCs) in the inner mitochondrial membrane with ubiquinol-cytochrome c oxidoreductase (cytochrome b-c1 complex, complex III, CIII).

It is found in the mitochondrion inner membrane. The protein operates within energy metabolism; oxidative phosphorylation. Component of the cytochrome c oxidase, the last enzyme in the mitochondrial electron transport chain which drives oxidative phosphorylation. The respiratory chain contains 3 multisubunit complexes succinate dehydrogenase (complex II, CII), ubiquinol-cytochrome c oxidoreductase (cytochrome b-c1 complex, complex III, CIII) and cytochrome c oxidase (complex IV, CIV), that cooperate to transfer electrons derived from NADH and succinate to molecular oxygen, creating an electrochemical gradient over the inner membrane that drives transmembrane transport and the ATP synthase. Cytochrome c oxidase is the component of the respiratory chain that catalyzes the reduction of oxygen to water. Electrons originating from reduced cytochrome c in the intermembrane space (IMS) are transferred via the dinuclear copper A center (CU(A)) of subunit 2 and heme A of subunit 1 to the active site in subunit 1, a binuclear center (BNC) formed by heme A3 and copper B (CU(B)). The BNC reduces molecular oxygen to 2 water molecules using 4 electrons from cytochrome c in the IMS and 4 protons from the mitochondrial matrix. This is Cytochrome c oxidase subunit 6, mitochondrial (cox6) from Schizosaccharomyces pombe (strain 972 / ATCC 24843) (Fission yeast).